A 308-amino-acid chain; its full sequence is Oxygen-dependent coproporphyrinogen-III oxidase (308 aa).

Substrate is bound at residue Ser-100. A divalent metal cation-binding residues include His-104 and His-114. The active-site Proton donor is the His-114. 116-118 serves as a coordination point for substrate; sequence NFR. Positions 153 and 183 each coordinate a divalent metal cation. Residues 248-283 are important for dimerization; it reads YVEFNLVFDRGTIFGLQSGGRTESILSSMPPMASWR. 266 to 268 contacts substrate; sequence GGR.

This sequence belongs to the aerobic coproporphyrinogen-III oxidase family. As to quaternary structure, homodimer. A divalent metal cation is required as a cofactor.

The protein localises to the cytoplasm. It catalyses the reaction coproporphyrinogen III + O2 + 2 H(+) = protoporphyrinogen IX + 2 CO2 + 2 H2O. It functions in the pathway porphyrin-containing compound metabolism; protoporphyrin-IX biosynthesis; protoporphyrinogen-IX from coproporphyrinogen-III (O2 route): step 1/1. In terms of biological role, involved in the heme biosynthesis. Catalyzes the aerobic oxidative decarboxylation of propionate groups of rings A and B of coproporphyrinogen-III to yield the vinyl groups in protoporphyrinogen-IX. This is Oxygen-dependent coproporphyrinogen-III oxidase from Francisella tularensis subsp. novicida (strain U112).